Reading from the N-terminus, the 170-residue chain is MDVKWLDVPEGDTEELKRNVFFTTLEQLKAWARSNSLWPLTFGLACCAIEMMGVGGAHYDLDRFGSFFRASPRQSDVMIVSGTVTKKMAPIIRRLYDQMPEPKWVIAMGSCATAGGPYVKSYSVVKGVDQIVPVDVYIPGCPPNPAALIYGINKLKEKIRYEAKTGKKVL.

C46, C47, C111, and C141 together coordinate [4Fe-4S] cluster.

This sequence belongs to the complex I 20 kDa subunit family. NDH-1 is composed of 14 different subunits. Subunits NuoB, C, D, E, F, and G constitute the peripheral sector of the complex. [4Fe-4S] cluster serves as cofactor.

The protein resides in the cell membrane. The catalysed reaction is a quinone + NADH + 5 H(+)(in) = a quinol + NAD(+) + 4 H(+)(out). NDH-1 shuttles electrons from NADH, via FMN and iron-sulfur (Fe-S) centers, to quinones in the respiratory chain. The immediate electron acceptor for the enzyme in this species is believed to be a menaquinone. Couples the redox reaction to proton translocation (for every two electrons transferred, four hydrogen ions are translocated across the cytoplasmic membrane), and thus conserves the redox energy in a proton gradient. The sequence is that of NADH-quinone oxidoreductase subunit B from Geobacillus sp. (strain WCH70).